Consider the following 226-residue polypeptide: Ribose-5-phosphate isomerase A (226 aa).

Substrate is bound by residues 26-29 (TGST), 82-85 (DGAD), and 95-98 (KGGG). Glu-104 acts as the Proton acceptor in catalysis. Position 122 (Lys-122) interacts with substrate.

This sequence belongs to the ribose 5-phosphate isomerase family. In terms of assembly, homodimer.

The catalysed reaction is aldehydo-D-ribose 5-phosphate = D-ribulose 5-phosphate. It participates in carbohydrate degradation; pentose phosphate pathway; D-ribose 5-phosphate from D-ribulose 5-phosphate (non-oxidative stage): step 1/1. Catalyzes the reversible conversion of ribose-5-phosphate to ribulose 5-phosphate. This chain is Ribose-5-phosphate isomerase A, found in Streptococcus uberis (strain ATCC BAA-854 / 0140J).